A 317-amino-acid polypeptide reads, in one-letter code: tRNA dimethylallyltransferase (317 aa).

14 to 21 (GPTASGKT) lines the ATP pocket. Position 16–21 (16–21 (TASGKT)) interacts with substrate. Interaction with substrate tRNA stretches follow at residues 39-42 (DSAL) and 163-167 (QRIQR).

Belongs to the IPP transferase family. Monomer. Mg(2+) is required as a cofactor.

It carries out the reaction adenosine(37) in tRNA + dimethylallyl diphosphate = N(6)-dimethylallyladenosine(37) in tRNA + diphosphate. Catalyzes the transfer of a dimethylallyl group onto the adenine at position 37 in tRNAs that read codons beginning with uridine, leading to the formation of N6-(dimethylallyl)adenosine (i(6)A). This chain is tRNA dimethylallyltransferase, found in Stenotrophomonas maltophilia (strain K279a).